A 276-amino-acid polypeptide reads, in one-letter code: Cell division protein FtsQ (276 aa).

Residues 1–27 (MSQAALNTRNSEEEVSSRRNNGTRLAG) are Cytoplasmic-facing. A helical transmembrane segment spans residues 28 to 48 (ILFLLTVLTTVLVSGWVVLGW). Residues 49 to 276 (MEDAQRLPLS…QQNQAQAEQQ (228 aa)) lie on the Periplasmic side of the membrane. One can recognise a POTRA domain in the interval 55 to 126 (LPLSKLVLTG…DELKIHLVEY (72 aa)). The interval 255 to 276 (GWAPLPPEESTQQQNQAQAEQQ) is disordered. Over residues 266 to 276 (QQQNQAQAEQQ) the composition is skewed to low complexity.

It belongs to the FtsQ/DivIB family. FtsQ subfamily. Part of a complex composed of FtsB, FtsL and FtsQ. The complex can be formed before its localization to the division site. This tripartite complex can be divided further into a subcomplex of FtsB and FtsL, which forms in the absence of FtsQ. Interacts with FtsA, FtsK, FtsL, FtsB, FtsW, FtsI, FtsN, FtsX and YmgF.

It localises to the cell inner membrane. Essential cell division protein. May link together the upstream cell division proteins, which are predominantly cytoplasmic, with the downstream cell division proteins, which are predominantly periplasmic. May control correct divisome assembly. In Escherichia coli (strain K12), this protein is Cell division protein FtsQ.